A 475-amino-acid chain; its full sequence is V-type ATP synthase beta chain (475 aa).

The protein belongs to the ATPase alpha/beta chains family.

In terms of biological role, produces ATP from ADP in the presence of a proton gradient across the membrane. The V-type beta chain is a regulatory subunit. In Anaeromyxobacter dehalogenans (strain 2CP-C), this protein is V-type ATP synthase beta chain.